Consider the following 337-residue polypeptide: MNLTDNAVIFVKGGNGGKGCVSFRREKYIPKGGPDGGNGGNGGNVWIYSDKNTHDLYHCLVRKNFIAEDGENGKKNNSSGKNGKDVIIKVPIGTNIFFIKNSENIIFGHTRFHNQKFLVAKGGVRGLGNNYFKSPTNRTPMESTLGKLGESFKIKLDFVFLADVGLFGYSNTGRSCFMRSISNVKPKISFYPFTTLFPYIGSLNFLNKDIKFVDIPSFIEGKKKNNLRNRFLKHLQNCRLLLHFINLDVKNVKKTINKEKINIKILKSFRNLFLKPIWLIINKTDININSNIFFKQAQFVSNSLGYEKKFFFISLNDFISIKILINKILLFLEENKR.

The Obg domain maps to 1–161 (MNLTDNAVIF…FKIKLDFVFL (161 aa)). The 172-residue stretch at 162–333 (ADVGLFGYSN…LINKILLFLE (172 aa)) folds into the OBG-type G domain. Residues 168–175 (GYSNTGRS), 193–197 (FTTLF), 214–217 (DIPS), 282–285 (NKTD), and 314–316 (SLN) contribute to the GTP site. Serine 175 and threonine 195 together coordinate Mg(2+).

This sequence belongs to the TRAFAC class OBG-HflX-like GTPase superfamily. OBG GTPase family. Monomer. Requires Mg(2+) as cofactor.

The protein localises to the cytoplasm. Its function is as follows. An essential GTPase which binds GTP, GDP and possibly (p)ppGpp with moderate affinity, with high nucleotide exchange rates and a fairly low GTP hydrolysis rate. Plays a role in control of the cell cycle, stress response, ribosome biogenesis and in those bacteria that undergo differentiation, in morphogenesis control. This is GTPase Obg from Wigglesworthia glossinidia brevipalpis.